The sequence spans 129 residues: Small ribosomal subunit protein uS11 (129 aa).

The protein belongs to the universal ribosomal protein uS11 family. Part of the 30S ribosomal subunit. Interacts with proteins S7 and S18. Binds to IF-3.

Located on the platform of the 30S subunit, it bridges several disparate RNA helices of the 16S rRNA. Forms part of the Shine-Dalgarno cleft in the 70S ribosome. This is Small ribosomal subunit protein uS11 from Actinobacillus succinogenes (strain ATCC 55618 / DSM 22257 / CCUG 43843 / 130Z).